Consider the following 308-residue polypeptide: 1D-myo-inositol 2-acetamido-2-deoxy-alpha-D-glucopyranoside deacetylase (308 aa).

Zn(2+) is bound by residues His-37, Asp-40, and His-171.

The protein belongs to the MshB deacetylase family. It depends on Zn(2+) as a cofactor.

It carries out the reaction 1D-myo-inositol 2-acetamido-2-deoxy-alpha-D-glucopyranoside + H2O = 1D-myo-inositol 2-amino-2-deoxy-alpha-D-glucopyranoside + acetate. In terms of biological role, catalyzes the deacetylation of 1D-myo-inositol 2-acetamido-2-deoxy-alpha-D-glucopyranoside (GlcNAc-Ins) in the mycothiol biosynthesis pathway. The chain is 1D-myo-inositol 2-acetamido-2-deoxy-alpha-D-glucopyranoside deacetylase from Mycobacterium sp. (strain KMS).